A 321-amino-acid polypeptide reads, in one-letter code: MAEAEAGGDEVRCVRLSAERAKLLLAEVDTLLFDCDGVLWRGETAVPGAPETLRALRARGKRLGFITNNSSKTRTAYAEKLRRLGFGGPMGPEAGLEVFGTAYCSALYLRQRLAGVPDPKAYVLGSPALAAELEAVGVTSVGVGPDVLHGDGPSDWLAVPLEPDVRAVVVGFDPHFSYMKLTKAVRYLQQPDCLLVGTNMDNRLPLENGRFIAGTGCLVRAVEMAAQRQADIIGKPSRFIFDCVSQEYGINPERTVMVGDRLDTDILLGSTCSLKTILTLTGVSSLEDVKSNQESDCMFKKKMVPDFYVDSIADLLPALQG.

The active-site Nucleophile is aspartate 34. Mg(2+)-binding residues include aspartate 34, aspartate 36, and aspartate 260. The Proton donor role is filled by aspartate 36.

The protein belongs to the HAD-like hydrolase superfamily. CbbY/CbbZ/Gph/YieH family. As to quaternary structure, homodimer. It depends on Mg(2+) as a cofactor. In terms of tissue distribution, expression was confirmed in liver, adipose tissue, testis and pancreatic islet.

The catalysed reaction is O-phospho-L-tyrosyl-[protein] + H2O = L-tyrosyl-[protein] + phosphate. The enzyme catalyses sn-glycerol 1-phosphate + H2O = glycerol + phosphate. It catalyses the reaction sn-glycerol 3-phosphate + H2O = glycerol + phosphate. In terms of biological role, glycerol-3-phosphate phosphatase hydrolyzing glycerol-3-phosphate into glycerol. Thereby, regulates the cellular levels of glycerol-3-phosphate a metabolic intermediate of glucose, lipid and energy metabolism. Was also shown to have a 2-phosphoglycolate phosphatase activity and a tyrosine-protein phosphatase activity. However, their physiological relevance is unclear. In vitro, also has a phosphatase activity toward ADP, ATP, GDP and GTP. This Rattus norvegicus (Rat) protein is Glycerol-3-phosphate phosphatase.